We begin with the raw amino-acid sequence, 281 residues long: Foldase protein PrsA (281 aa).

Positions 1-18 (MKKWMMAAAVVSLMALSA) are cleaved as a signal peptide. C19 carries the N-palmitoyl cysteine lipid modification. A lipid anchor (S-diacylglycerol cysteine) is attached at C19. One can recognise a PpiC domain in the interval 133–223 (KPKIRASHIL…YGYHIIKVTD (91 aa)).

This sequence belongs to the PrsA family.

It is found in the cell membrane. The enzyme catalyses [protein]-peptidylproline (omega=180) = [protein]-peptidylproline (omega=0). In terms of biological role, plays a major role in protein secretion by helping the post-translocational extracellular folding of several secreted proteins. The sequence is that of Foldase protein PrsA from Geobacillus kaustophilus (strain HTA426).